Here is a 287-residue protein sequence, read N- to C-terminus: Syntaxin-11 (287 aa).

Residues leucine 41–arginine 71 adopt a coiled-coil conformation. A t-SNARE coiled-coil homology domain is found at leucine 204–alanine 266.

The protein belongs to the syntaxin family. In terms of assembly, interacts with the SNARE proteins SNAP-23 and VAMP.

Its subcellular location is the membrane. It localises to the golgi apparatus. The protein localises to the trans-Golgi network membrane. In terms of biological role, SNARE that acts to regulate protein transport between late endosomes and the trans-Golgi network. The polypeptide is Syntaxin-11 (Stx11) (Mus musculus (Mouse)).